We begin with the raw amino-acid sequence, 481 residues long: Dual specificity protein kinase CLK4 (481 aa).

Disordered stretches follow at residues 1–46 and 102–143; these read MRHS…CKPH and SKSS…EDDE. The span at 8-24 shows a compositional bias: basic and acidic residues; the sequence is HCPDWDSRESWGHESYR. 2 stretches are compositionally biased toward basic residues: residues 25–34 and 106–136; these read GSHKRKRRSH and VRSR…RKRS. A phosphoserine mark is found at S136 and S138. The Protein kinase domain occupies 159 to 475; sequence YEIVDTLGEG…LDEALQHPFF (317 aa). Residues 165–173 and K189 each bind ATP; that span reads LGEGAFGKV. D286 acts as the Proton acceptor in catalysis.

The protein belongs to the protein kinase superfamily. CMGC Ser/Thr protein kinase family. Lammer subfamily. In terms of assembly, interacts with UBL5. Autophosphorylates on all three types of residues. Expressed in liver, kidney, heart, muscle, brain and endothelial cells.

The protein localises to the nucleus. It carries out the reaction L-seryl-[protein] + ATP = O-phospho-L-seryl-[protein] + ADP + H(+). The catalysed reaction is L-threonyl-[protein] + ATP = O-phospho-L-threonyl-[protein] + ADP + H(+). It catalyses the reaction L-tyrosyl-[protein] + ATP = O-phospho-L-tyrosyl-[protein] + ADP + H(+). Its activity is regulated as follows. TG003 inhibits its kinase activity and affects the regulation of alternative splicing mediated by phosphorylation of SR proteins. Functionally, dual specificity kinase acting on both serine/threonine and tyrosine-containing substrates. Phosphorylates serine- and arginine-rich (SR) proteins of the spliceosomal complex and may be a constituent of a network of regulatory mechanisms that enable SR proteins to control RNA splicing. Phosphorylates SRSF1 and SRSF3. Required for the regulation of alternative splicing of MAPT/TAU. Regulates the alternative splicing of tissue factor (F3) pre-mRNA in endothelial cells. In Homo sapiens (Human), this protein is Dual specificity protein kinase CLK4 (CLK4).